The chain runs to 339 residues: Dihydroorotate dehydrogenase (quinone) (339 aa).

Residues 64 to 68 (AGADK) and Thr88 each bind FMN. Lys68 is a substrate binding site. 113-117 (NRNGF) serves as a coordination point for substrate. FMN-binding residues include Asn141 and Asn174. Asn174 provides a ligand contact to substrate. Ser177 acts as the Nucleophile in catalysis. A substrate-binding site is contributed by Asn179. Positions 219 and 247 each coordinate FMN. 248–249 (NT) is a substrate binding site. Residues Gly270, Gly299, and 320–321 (YS) each bind FMN.

The protein belongs to the dihydroorotate dehydrogenase family. Type 2 subfamily. In terms of assembly, monomer. It depends on FMN as a cofactor.

The protein localises to the cell membrane. The enzyme catalyses (S)-dihydroorotate + a quinone = orotate + a quinol. Its pathway is pyrimidine metabolism; UMP biosynthesis via de novo pathway; orotate from (S)-dihydroorotate (quinone route): step 1/1. Its function is as follows. Catalyzes the conversion of dihydroorotate to orotate with quinone as electron acceptor. The sequence is that of Dihydroorotate dehydrogenase (quinone) from Haemophilus influenzae (strain 86-028NP).